We begin with the raw amino-acid sequence, 219 residues long: Small ribosomal subunit protein uS3c (219 aa).

A KH type-2 domain is found at 39–118 (IRSFIRKYIQ…RLNIVITKVE (80 aa)).

The protein belongs to the universal ribosomal protein uS3 family. In terms of assembly, part of the 30S ribosomal subunit.

The protein resides in the plastid. This Cuscuta obtusiflora (Peruvian dodder) protein is Small ribosomal subunit protein uS3c (rps3).